The following is a 433-amino-acid chain: Tol-Pal system protein TolB (433 aa).

An N-terminal signal peptide occupies residues 1–21 (MIKRLRGLLVLLCCVAGMAMA).

This sequence belongs to the TolB family. As to quaternary structure, the Tol-Pal system is composed of five core proteins: the inner membrane proteins TolA, TolQ and TolR, the periplasmic protein TolB and the outer membrane protein Pal. They form a network linking the inner and outer membranes and the peptidoglycan layer.

Its subcellular location is the periplasm. Its function is as follows. Part of the Tol-Pal system, which plays a role in outer membrane invagination during cell division and is important for maintaining outer membrane integrity. The polypeptide is Tol-Pal system protein TolB (Pseudomonas entomophila (strain L48)).